The sequence spans 542 residues: Putative CTP synthase (542 aa).

Residues 1 to 277 (MEIDLMKHIQ…HKTILDFFSL (277 aa)) form an amidoligase domain region. CTP is bound at residue Ser23. A UTP-binding site is contributed by Ser23. ATP-binding positions include 24–29 (SLGKGV) and Asp81. The Mg(2+) site is built by Asp81 and Glu151. CTP-binding positions include 158 to 160 (DIE), 198 to 203 (KTKPTQ), and Lys234. UTP-binding positions include 198 to 203 (KTKPTQ) and Lys234. One can recognise a Glutamine amidotransferase type-1 domain in the interval 310–542 (YVELPDAYKS…LKMSLKIKES (233 aa)). Glu517 is an active-site residue.

The protein belongs to the CTP synthase family. In terms of assembly, homotetramer.

It carries out the reaction UTP + L-glutamine + ATP + H2O = CTP + L-glutamate + ADP + phosphate + 2 H(+). The enzyme catalyses L-glutamine + H2O = L-glutamate + NH4(+). The catalysed reaction is UTP + NH4(+) + ATP = CTP + ADP + phosphate + 2 H(+). Its pathway is pyrimidine metabolism; CTP biosynthesis via de novo pathway; CTP from UDP: step 2/2. Its activity is regulated as follows. Allosterically activated by GTP, when glutamine is the substrate; GTP has no effect on the reaction when ammonia is the substrate. The allosteric effector GTP functions by stabilizing the protein conformation that binds the tetrahedral intermediate(s) formed during glutamine hydrolysis. Inhibited by the product CTP, via allosteric rather than competitive inhibition. Its function is as follows. Catalyzes the ATP-dependent amination of UTP to CTP with either L-glutamine or ammonia as the source of nitrogen. Regulates intracellular CTP levels through interactions with the four ribonucleotide triphosphates. This is Putative CTP synthase from Ureaplasma parvum serovar 3 (strain ATCC 700970).